A 255-amino-acid polypeptide reads, in one-letter code: Pimeloyl-[acyl-carrier protein] methyl ester esterase (255 aa).

An AB hydrolase-1 domain is found at 16-242 (LVLLHGWGLN…AAHAPFISHP (227 aa)). Substrate contacts are provided by residues tryptophan 22, 82-83 (SL), and 143-147 (FLALQ). The Nucleophile role is filled by serine 82. Active-site residues include aspartate 207 and histidine 235. Residue histidine 235 participates in substrate binding.

The protein belongs to the AB hydrolase superfamily. Carboxylesterase BioH family. As to quaternary structure, monomer.

The protein resides in the cytoplasm. The catalysed reaction is 6-carboxyhexanoyl-[ACP] methyl ester + H2O = 6-carboxyhexanoyl-[ACP] + methanol + H(+). The protein operates within cofactor biosynthesis; biotin biosynthesis. In terms of biological role, the physiological role of BioH is to remove the methyl group introduced by BioC when the pimeloyl moiety is complete. It allows to synthesize pimeloyl-ACP via the fatty acid synthetic pathway through the hydrolysis of the ester bonds of pimeloyl-ACP esters. The chain is Pimeloyl-[acyl-carrier protein] methyl ester esterase from Pectobacterium atrosepticum (strain SCRI 1043 / ATCC BAA-672) (Erwinia carotovora subsp. atroseptica).